The sequence spans 397 residues: Proteinase-activated receptor 2 (397 aa).

Residues methionine 1 to threonine 25 form the signal peptide. Asparagine 23 is a glycosylation site (N-linked (GlcNAc...) asparagine). Positions valine 26–arginine 36 are cleaved as a propeptide — removed for receptor activation. At serine 37 to glycine 71 the chain is on the extracellular side. Residues lysine 72–phenylalanine 101 traverse the membrane as a helical segment. Residues phenylalanine 102–histidine 108 are Cytoplasmic-facing. The helical transmembrane segment at proline 109–histidine 137 threads the bilayer. Over glycine 138 to lysine 149 the chain is Extracellular. Cysteine 148 and cysteine 226 are joined by a disulfide. A helical transmembrane segment spans residues valine 150–isoleucine 177. The Cytoplasmic segment spans residues valine 178 to histidine 183. A helical transmembrane segment spans residues serine 184–valine 211. Over methionine 212–leucine 235 the chain is Extracellular. A glycan (N-linked (GlcNAc...) asparagine) is linked at asparagine 222. A helical membrane pass occupies residues valine 236–leucine 269. The Cytoplasmic segment spans residues arginine 270 to histidine 277. The helical transmembrane segment at serine 278–glutamine 317 threads the bilayer. At arginine 318–tyrosine 323 the chain is on the extracellular side. The helical transmembrane segment at alanine 324 to valine 347 threads the bilayer. Topologically, residues serine 348–tyrosine 397 are cytoplasmic. The S-palmitoyl cysteine moiety is linked to residue cysteine 361.

Belongs to the G-protein coupled receptor 1 family. As to quaternary structure, interacts with TLR4, COPS5 and TMED2. Interacts with GNAQ, GNA11, GNA12, GNA13 and GNA14. In terms of processing, a proteolytic cleavage generates a new N-terminus that functions as a tethered ligand. Activating serine proteases include trypsin, mast cell tryptase, coagulation factors VII and Xa, myeloblastin/PRTN3 and membrane-type serine protease 1/ST14. Proposed subsequent cleavage by serine proteases is leading to receptor deactivation and include neutrophil elastase and cathepsin G. At least in part, implicated proteases are also shown to activate the receptor; the glycosylation status of the receptor is thought to contribute to the difference. N-glycosylated and sialylated. Post-translationally, multiple phosphorylated on serine and threonine residues in the cytoplasmic region upon receptor activation; required for receptor desensitization and recruitment of beta-arrestin. In terms of processing, monoubiquitinated by Cbl at the plasma membrane and in early endosomes; not required for receptor endocytosis but for translocation to late endosomes or lysosomes. Deubiquitination involves Stambp and Usp8; required for lysosomal trafficking and receptor degradation.

Its subcellular location is the cell membrane. Functionally, receptor for trypsin and trypsin-like enzymes coupled to G proteins. Its function is mediated through the activation of several signaling pathways including phospholipase C (PLC), intracellular calcium, mitogen-activated protein kinase (MAPK), I-kappaB kinase/NF-kappaB and Rho. Can also be transactivated by cleaved F2R/PAR1. Involved in modulation of inflammatory responses and regulation of innate and adaptive immunity, and acts as a sensor for proteolytic enzymes generated during infection. Generally is promoting inflammation. Can signal synergistically with TLR4 and probably TLR2 in inflammatory responses and modulates Tlr3 signaling. Has a protective role in establishing the endothelial barrier; the activity involves coagulation factor X. Regulates endothelial cell barrier integrity during neutrophil extravasation, probably following proteolytic cleavage by PRTN3. Proposed to have a bronchoprotective role in airway epithelium, but also shown to compromise the airway epithelial barrier by interrupting E-cadherin adhesion. Involved in the regulation of vascular tone; activation results in hypotension presumably mediated by vasodilation. Associates with a subset of G proteins alpha subunits such as GNAQ, GNA11, GNA14, GNA12 and GNA13, but probably not with G(o)-alpha, G(i) subunit alpha-1 and G(i) subunit alpha-2. Believed to be a class B receptor which internalizes as a complex with arrestin and traffic with it to endosomal vesicles, presumably as desensitized receptor, for extended periods of time. Mediates inhibition of TNF-alpha stimulated JNK phosphorylation via coupling to G GNAQ and GNA11; the function involves dissociation of RIPK1 and Tradd from TNFR1. Mediates phosphorylation of nuclear factor NF-kappa-B RELA subunit at 'Ser-536'; the function involves Ikbkb and is predominantly independent of G proteins. Involved in cellular migration. Involved in cytoskeletal rearrangement and chemotaxis through beta-arrestin-promoted scaffolds; the function is independent of GNAQ and GNA11 and involves promotion of cofilin dephosphorylation and actin filament severing. Induces redistribution of COPS5 from the plasma membrane to the cytosol and activation of the JNK cascade is mediated by Cops5. Involved in the recruitment of leukocytes to the sites of inflammation and is the major PAR receptor capable of modulating eosinophil function such as pro-inflammatory cytokine secretion, superoxide production and degranulation. During inflammation promotes dendritic cell maturation, trafficking to the lymph nodes and subsequent T-cell activation. Involved in antimicrobial response of innate immune cells; activation enhances phagocytosis of Gram-positive and killing of Gram-negative bacteria. Acts synergistically with interferon-gamma in enhancing antiviral responses. Probably mediates activation of pro-inflammatory and pro-fibrotic responses in fibroblasts, triggered by coagulation factor Xa (F10). Probably mediates activation of barrier protective signaling responses in endothelial cells, triggered by coagulation factor Xa (F10). The polypeptide is Proteinase-activated receptor 2 (F2rl1) (Rattus norvegicus (Rat)).